The primary structure comprises 149 residues: Large ribosomal subunit protein uL13 (149 aa).

The protein belongs to the universal ribosomal protein uL13 family. As to quaternary structure, part of the 50S ribosomal subunit.

Its function is as follows. This protein is one of the early assembly proteins of the 50S ribosomal subunit, although it is not seen to bind rRNA by itself. It is important during the early stages of 50S assembly. This is Large ribosomal subunit protein uL13 from Thermobifida fusca (strain YX).